Here is a 557-residue protein sequence, read N- to C-terminus: Formate--tetrahydrofolate ligase (557 aa).

Position 66–73 (66–73 (TPAGEGKS)) interacts with ATP.

It belongs to the formate--tetrahydrofolate ligase family.

It catalyses the reaction (6S)-5,6,7,8-tetrahydrofolate + formate + ATP = (6R)-10-formyltetrahydrofolate + ADP + phosphate. The protein operates within one-carbon metabolism; tetrahydrofolate interconversion. The chain is Formate--tetrahydrofolate ligase from Clostridium botulinum (strain ATCC 19397 / Type A).